The sequence spans 303 residues: MFGKKNLKWLGVVATLMMTFVQLGGALVTKTGSADGCGSSWPLCHGALIPEFFPIDTIIELSHRAVSALSLLMVLWLVITAWKHIGYIKEIKPLSIISVGFLLLQALIGAAAVIWQQNDYVLALHFGISLISFSSVFLITLIIFSIDQKYEAAELYIKKPLRRLTWLMAIIIYCGVYTGALVRHADASLAYGGWPLPFHDLVPHSEQDWVQLTHRIMAFIVFTIIMITYIHAVKNYPNNRTVHYGYTAAFILVILQVITGALSIMTNVNLIIALFHALFITYLFGMTTYFIMLMLRSVRSDKQ.

Residues 1–8 are Cytoplasmic-facing; sequence MFGKKNLK. Residues 9 to 29 form a helical membrane-spanning segment; that stretch reads WLGVVATLMMTFVQLGGALVT. The Extracellular portion of the chain corresponds to 30–67; it reads KTGSADGCGSSWPLCHGALIPEFFPIDTIIELSHRAVS. The cysteines at positions 37 and 44 are disulfide-linked. Glu-60 is a catalytic residue. His-63 serves as a coordination point for heme o. The chain crosses the membrane as a helical span at residues 68–88; the sequence is ALSLLMVLWLVITAWKHIGYI. At 89–93 the chain is on the cytoplasmic side; sequence KEIKP. Residues 94–114 form a helical membrane-spanning segment; the sequence is LSIISVGFLLLQALIGAAAVI. Residues 115-125 lie on the Extracellular side of the membrane; that stretch reads WQQNDYVLALH. A heme o-binding site is contributed by His-125. The helical transmembrane segment at 126-146 threads the bilayer; sequence FGISLISFSSVFLITLIIFSI. Residues 147 to 163 are Cytoplasmic-facing; sequence DQKYEAAELYIKKPLRR. Residues 164–184 traverse the membrane as a helical segment; it reads LTWLMAIIIYCGVYTGALVRH. Over 185-215 the chain is Extracellular; it reads ADASLAYGGWPLPFHDLVPHSEQDWVQLTHR. His-214 serves as a coordination point for heme b. Residues 216–236 traverse the membrane as a helical segment; it reads IMAFIVFTIIMITYIHAVKNY. The Cytoplasmic portion of the chain corresponds to 237–244; sequence PNNRTVHY. Residues 245–265 traverse the membrane as a helical segment; the sequence is GYTAAFILVILQVITGALSIM. Over 266 to 270 the chain is Extracellular; the sequence is TNVNL. A helical transmembrane segment spans residues 271–291; sequence IIALFHALFITYLFGMTTYFI. Heme b is bound at residue His-276. Over 292 to 303 the chain is Cytoplasmic; that stretch reads MLMLRSVRSDKQ.

This sequence belongs to the COX15/CtaA family. Type 1 subfamily. As to quaternary structure, interacts with CtaB. The cofactor is heme b.

The protein resides in the cell membrane. It catalyses the reaction Fe(II)-heme o + 2 A + H2O = Fe(II)-heme a + 2 AH2. It participates in porphyrin-containing compound metabolism; heme A biosynthesis; heme A from heme O: step 1/1. Its function is as follows. Catalyzes the conversion of heme O to heme A by two successive hydroxylations of the methyl group at C8. The first hydroxylation forms heme I, the second hydroxylation results in an unstable dihydroxymethyl group, which spontaneously dehydrates, resulting in the formyl group of heme A. The sequence is that of Heme A synthase from Staphylococcus aureus (strain bovine RF122 / ET3-1).